Reading from the N-terminus, the 104-residue chain is Large ribosomal subunit protein bL21 (104 aa).

It belongs to the bacterial ribosomal protein bL21 family. As to quaternary structure, part of the 50S ribosomal subunit. Contacts protein L20.

This protein binds to 23S rRNA in the presence of protein L20. In Streptococcus thermophilus (strain ATCC BAA-491 / LMD-9), this protein is Large ribosomal subunit protein bL21.